We begin with the raw amino-acid sequence, 419 residues long: MDKFRVQGRTRLSGEVAISGAKNAALPILFAALLAEEPVELQNVPKLKDIDTTIKLLNQLGTKIERNGSVFVDASGVNEFCAPYDLVKTMRASIWALGPLVARFGRGQVSLPGGCAIGARPVDLHITGLEQLGAEIKLEEGYVKASVDGRLKGAHIVMDKVSVGATVTIMSAATLATGTTVIENAAREPEIVDTANFLNTLGAKITGAGSDRITIEGVERLGGGVYRVLPDRIETGTFLIAAAVSGGKVMCRDTRPDTLDAVLAKLREAGADIEVGEDWISLDMHGKRPKAVTIRTAPHPGFPTDMQAQFSLLNLVAEGTGVITETIFENRFMHVPELIRMGAHAEIESNTVICHGVEQLSGAQVMATDLRASASLVIAGCIADGVTVVDRIYHIDRGYERIEDKLRALGANIERVKGE.

22-23 is a phosphoenolpyruvate binding site; it reads KN. Arginine 91 lines the UDP-N-acetyl-alpha-D-glucosamine pocket. Cysteine 115 serves as the catalytic Proton donor. Cysteine 115 carries the post-translational modification 2-(S-cysteinyl)pyruvic acid O-phosphothioketal. UDP-N-acetyl-alpha-D-glucosamine contacts are provided by residues 120–124, 160–163, aspartate 305, and isoleucine 327; these read RPVDL and KVSV.

This sequence belongs to the EPSP synthase family. MurA subfamily.

It is found in the cytoplasm. It carries out the reaction phosphoenolpyruvate + UDP-N-acetyl-alpha-D-glucosamine = UDP-N-acetyl-3-O-(1-carboxyvinyl)-alpha-D-glucosamine + phosphate. Its pathway is cell wall biogenesis; peptidoglycan biosynthesis. Cell wall formation. Adds enolpyruvyl to UDP-N-acetylglucosamine. In Serratia proteamaculans (strain 568), this protein is UDP-N-acetylglucosamine 1-carboxyvinyltransferase.